The chain runs to 252 residues: Carbonic anhydrase (252 aa).

The first 26 residues, 1–26 (MPRFPRTLPRLTAVLLLACTAFSAAA), serve as a signal peptide directing secretion. The 222-residue stretch at 31-252 (THWGYTGHDS…QPLNARVVIE (222 aa)) folds into the Alpha-carbonic anhydrase domain. Cysteines 54 and 207 form a disulfide. Histidine 92 (proton acceptor) is an active-site residue. The Zn(2+) site is built by histidine 118, histidine 120, and histidine 137. Substrate is bound at residue 203–204 (TT).

It belongs to the alpha-carbonic anhydrase family. As to quaternary structure, homodimer. Zn(2+) is required as a cofactor.

It is found in the periplasm. It carries out the reaction hydrogencarbonate + H(+) = CO2 + H2O. Reversible hydration of carbon dioxide. This Neisseria gonorrhoeae protein is Carbonic anhydrase (cah).